Here is a 127-residue protein sequence, read N- to C-terminus: MSNRKPYVREMTRTWWKDHPFYRFYMVREATVLPLIFFTICLLVGLGSLVKGPLAWASWLDFMANPIVVALNIVALAGSLFHAQTFFSMMPQVMPIRLGGKTLDKKVVVLAQWAAVAAITLLVLVIV.

Helical transmembrane passes span 30–50 (ATVL…GSLV), 67–87 (IVVA…QTFF), and 107–127 (VVVL…LVIV).

The protein belongs to the FrdC family. Part of an enzyme complex containing four subunits: a flavoprotein (FrdA), an iron-sulfur protein (FrdB), and two hydrophobic anchor proteins (FrdC and FrdD).

It is found in the cell inner membrane. Functionally, anchors the catalytic components of the fumarate reductase complex to the cell membrane, binds quinones. This chain is Fumarate reductase subunit C, found in Aliivibrio fischeri (strain ATCC 700601 / ES114) (Vibrio fischeri).